The primary structure comprises 384 residues: MDIADQTFVKKVNQKLLLKEILKNSPISRAKLSEMTGLNKSTVSSQVNTLMKENLVFEIGQGQSSGGRRPVMLVFNKKAGYSIGIDVGVDYISGILTDLEGTIILDQHHHLESNSPEITKDILIDMIHHFITRMPQSPYGLIGIGICVPGLIDKNQKIVFTPNSNWRDIDLKSFIQEKFNVPVFIENEANAGAYGEKVFGAAKNHNNIIYASISTGIGIGVIINNHLYRGVSGFSGEMGHMTIDFNGPKCSCGNRGCWELYASEKALLKSLQTKEKKVSYQDIIDLAHLNDIGTLNALQNFGFYLGIGLTNILNTFNPQAIILRNSIIESHPMVLNSIRSEVSSRVYPQLGNSYELLPSSLGKNAPALGMSSIVIEHFLDIVKM.

The H-T-H motif DNA-binding region spans 29–48 (RAKLSEMTGLNKSTVSSQVN).

This sequence belongs to the ROK (NagC/XylR) family.

Functionally, transcriptional repressor of xylose-utilizing enzymes. This Bacillus spizizenii (strain ATCC 23059 / NRRL B-14472 / W23) (Bacillus subtilis subsp. spizizenii) protein is Xylose repressor (xylR).